The following is a 428-amino-acid chain: Putative UDP-glucose 6-dehydrogenase YtcA (428 aa).

An N-terminal signal peptide occupies residues 1 to 23; sequence MKICVVGAGYVGLTLSAALASIG. Residues 2–19, Val11, Asp30, Lys35, Thr118, and Glu152 contribute to the NAD(+) site; that span reads KICV…SAAL. Substrate-binding positions include 148–152, Lys203, Asn207, 248–252, and Gly256; these read EFLRE and FLQAG. Cys259 (nucleophile) is an active-site residue. Lys262 serves as a coordination point for NAD(+). Residue Lys319 coordinates substrate. Arg326 serves as a coordination point for NAD(+).

The protein belongs to the UDP-glucose/GDP-mannose dehydrogenase family.

The catalysed reaction is UDP-alpha-D-glucose + 2 NAD(+) + H2O = UDP-alpha-D-glucuronate + 2 NADH + 3 H(+). It functions in the pathway nucleotide-sugar biosynthesis; UDP-alpha-D-glucuronate biosynthesis; UDP-alpha-D-glucuronate from UDP-alpha-D-glucose: step 1/1. Its function is as follows. Catalyzes the conversion of UDP-glucose into UDP-glucuronate, one of the precursors of teichuronic acid. This chain is Putative UDP-glucose 6-dehydrogenase YtcA (ytcA), found in Bacillus subtilis (strain 168).